The sequence spans 245 residues: 8-amino-3,8-dideoxy-manno-octulosonate cytidylyltransferase (245 aa).

This sequence belongs to the KdsB family.

The protein resides in the cytoplasm. It catalyses the reaction 8-amino-3,8-dideoxy-alpha-D-manno-octulosonate + CTP = CMP-8-amino-3,8-dideoxy-alpha-D-manno-oct-2-ulosonate + diphosphate. It functions in the pathway bacterial outer membrane biogenesis; lipopolysaccharide biosynthesis. Activates KDO8N (a required 8-carbon sugar) for incorporation into bacterial lipopolysaccharide in the Shewanella genus. This is 8-amino-3,8-dideoxy-manno-octulosonate cytidylyltransferase from Shewanella woodyi (strain ATCC 51908 / MS32).